Consider the following 189-residue polypeptide: 3-hydroxyanthranilate 3,4-dioxygenase (189 aa).

Residue R50 coordinates O2. Fe cation contacts are provided by H54, E60, and H102. Position 60 (E60) interacts with substrate. 2 residues coordinate substrate: R106 and E116. Positions 131, 136, 170, and 173 each coordinate a divalent metal cation.

It belongs to the 3-HAO family. Fe(2+) serves as cofactor.

It is found in the cytoplasm. It carries out the reaction 3-hydroxyanthranilate + O2 = (2Z,4Z)-2-amino-3-carboxymuconate 6-semialdehyde. It functions in the pathway cofactor biosynthesis; NAD(+) biosynthesis; quinolinate from L-kynurenine: step 3/3. Functionally, catalyzes the oxidative ring opening of 3-hydroxyanthranilate to 2-amino-3-carboxymuconate semialdehyde, which spontaneously cyclizes to quinolinate. The chain is 3-hydroxyanthranilate 3,4-dioxygenase (bna1) from Aspergillus niger (strain ATCC MYA-4892 / CBS 513.88 / FGSC A1513).